We begin with the raw amino-acid sequence, 398 residues long: 1-deoxy-D-xylulose 5-phosphate reductoisomerase (398 aa).

Residues threonine 10, glycine 11, serine 12, isoleucine 13, glycine 36, lysine 37, asparagine 38, and asparagine 124 each coordinate NADPH. Position 125 (lysine 125) interacts with 1-deoxy-D-xylulose 5-phosphate. Glutamate 126 provides a ligand contact to NADPH. Residue aspartate 150 participates in Mn(2+) binding. 1-deoxy-D-xylulose 5-phosphate contacts are provided by serine 151, glutamate 152, serine 186, and histidine 209. A Mn(2+)-binding site is contributed by glutamate 152. An NADPH-binding site is contributed by glycine 215. 4 residues coordinate 1-deoxy-D-xylulose 5-phosphate: serine 222, asparagine 227, lysine 228, and glutamate 231. Glutamate 231 provides a ligand contact to Mn(2+).

This sequence belongs to the DXR family. In terms of assembly, homodimer. It depends on Mg(2+) as a cofactor. The cofactor is Mn(2+). Requires Co(2+) as cofactor.

The catalysed reaction is 2-C-methyl-D-erythritol 4-phosphate + NADP(+) = 1-deoxy-D-xylulose 5-phosphate + NADPH + H(+). It participates in isoprenoid biosynthesis; isopentenyl diphosphate biosynthesis via DXP pathway; isopentenyl diphosphate from 1-deoxy-D-xylulose 5-phosphate: step 1/6. With respect to regulation, inhibited by fosmidomycin. Functionally, catalyzes the NADPH-dependent rearrangement and reduction of 1-deoxy-D-xylulose-5-phosphate (DXP) to 2-C-methyl-D-erythritol 4-phosphate (MEP). This chain is 1-deoxy-D-xylulose 5-phosphate reductoisomerase (dxr), found in Escherichia coli (strain K12).